The primary structure comprises 154 residues: 6,7-dimethyl-8-ribityllumazine synthase (154 aa).

Residues F26, 60-62, and 84-86 each bind 5-amino-6-(D-ribitylamino)uracil; these read ALE and CII. 89–90 serves as a coordination point for (2S)-2-hydroxy-3-oxobutyl phosphate; that stretch reads QT. H92 acts as the Proton donor in catalysis. 5-amino-6-(D-ribitylamino)uracil is bound at residue N117. R131 contacts (2S)-2-hydroxy-3-oxobutyl phosphate.

This sequence belongs to the DMRL synthase family.

It carries out the reaction (2S)-2-hydroxy-3-oxobutyl phosphate + 5-amino-6-(D-ribitylamino)uracil = 6,7-dimethyl-8-(1-D-ribityl)lumazine + phosphate + 2 H2O + H(+). It functions in the pathway cofactor biosynthesis; riboflavin biosynthesis; riboflavin from 2-hydroxy-3-oxobutyl phosphate and 5-amino-6-(D-ribitylamino)uracil: step 1/2. Functionally, catalyzes the formation of 6,7-dimethyl-8-ribityllumazine by condensation of 5-amino-6-(D-ribitylamino)uracil with 3,4-dihydroxy-2-butanone 4-phosphate. This is the penultimate step in the biosynthesis of riboflavin. The polypeptide is 6,7-dimethyl-8-ribityllumazine synthase (Verminephrobacter eiseniae (strain EF01-2)).